Reading from the N-terminus, the 304-residue chain is Acetylglutamate kinase (304 aa).

Substrate is bound by residues 75-76 (GG), arginine 97, and asparagine 196.

The protein belongs to the acetylglutamate kinase family. ArgB subfamily.

The protein resides in the cytoplasm. It catalyses the reaction N-acetyl-L-glutamate + ATP = N-acetyl-L-glutamyl 5-phosphate + ADP. Its pathway is amino-acid biosynthesis; L-arginine biosynthesis; N(2)-acetyl-L-ornithine from L-glutamate: step 2/4. Catalyzes the ATP-dependent phosphorylation of N-acetyl-L-glutamate. The polypeptide is Acetylglutamate kinase (Corynebacterium urealyticum (strain ATCC 43042 / DSM 7109)).